We begin with the raw amino-acid sequence, 75 residues long: UPF0235 protein Mvan_2846 (75 aa).

The protein belongs to the UPF0235 family.

This is UPF0235 protein Mvan_2846 from Mycolicibacterium vanbaalenii (strain DSM 7251 / JCM 13017 / BCRC 16820 / KCTC 9966 / NRRL B-24157 / PYR-1) (Mycobacterium vanbaalenii).